We begin with the raw amino-acid sequence, 509 residues long: Maturase K (509 aa).

The protein belongs to the intron maturase 2 family. MatK subfamily.

It is found in the plastid. The protein resides in the chloroplast. Usually encoded in the trnK tRNA gene intron. Probably assists in splicing its own and other chloroplast group II introns. The protein is Maturase K of Abies firma (Momi fir).